A 62-amino-acid chain; its full sequence is ATP synthase subunit epsilon, mitochondrial (62 aa).

Phosphothreonine is present on Thr-52.

Belongs to the eukaryotic ATPase epsilon family. As to quaternary structure, F-type ATPases have 2 components, CF(1) - the catalytic core - and CF(0) - the membrane proton channel. CF(1) has five subunits: alpha(3), beta(3), gamma(1), delta(1), epsilon(1). CF(0) has three main subunits: a, b and c.

It is found in the mitochondrion. It localises to the mitochondrion inner membrane. In terms of biological role, mitochondrial membrane ATP synthase (F(1)F(0) ATP synthase or Complex V) produces ATP from ADP in the presence of a proton gradient across the membrane which is generated by electron transport complexes of the respiratory chain. F-type ATPases consist of two structural domains, F(1) - containing the extramembraneous catalytic core, and F(0) - containing the membrane proton channel, linked together by a central stalk and a peripheral stalk. During catalysis, ATP synthesis in the catalytic domain of F(1) is coupled via a rotary mechanism of the central stalk subunits to proton translocation. Part of the complex F(1) domain and of the central stalk which is part of the complex rotary element. Rotation of the central stalk against the surrounding alpha(3)beta(3) subunits leads to hydrolysis of ATP in three separate catalytic sites on the beta subunits. This Saccharomyces cerevisiae (strain ATCC 204508 / S288c) (Baker's yeast) protein is ATP synthase subunit epsilon, mitochondrial (ATP15).